Reading from the N-terminus, the 1134-residue chain is Spermatogenesis-associated protein 31C2 (1134 aa).

A helical membrane pass occupies residues 23-43; it reads PWVLDIFLTLVFALGFFFLLL. Disordered regions lie at residues 54-87, 115-243, 477-504, 524-561, 727-807, 928-1007, and 1111-1134; these read PPSPSPKKRKRHLVSQRPAGRRGRPRGRMKNHSL, LEKG…LLTP, PGTSQAKGKPRPWQSSTSTGESSKEAQT, TPQNLSRGMESFPGKVLGATSEESERNLRKPLRSDSGS, MPER…PTVP, NMGH…PSIS, and AASSQQATLKNQSRPNRDRQIRDQ. Over residues 59-87 the composition is skewed to basic residues; it reads PKKRKRHLVSQRPAGRRGRPRGRMKNHSL. Positions 132 to 148 are enriched in basic and acidic residues; it reads VGKRTPDGASRSSHEPT. Positions 185 to 201 are enriched in low complexity; sequence SSLSASQPPEPSLLLEH. Positions 204 to 235 are enriched in pro residues; the sequence is PEPPALFPHPPRTPDPLACSPPPPKGFTPPPL. Residues 489–504 are compositionally biased toward polar residues; sequence WQSSTSTGESSKEAQT. Polar residues-rich tracts occupy residues 773–794 and 937–948; these read LTYSLTGSTQQSRSLGAQSSRA and PNCQGSCKSQSP. Residues 954–970 are compositionally biased toward basic and acidic residues; sequence HKRENSRKPNLEKHEEM. Residues 1111 to 1124 are compositionally biased toward polar residues; the sequence is AASSQQATLKNQSR. Basic and acidic residues predominate over residues 1125–1134; sequence PNRDRQIRDQ.

The protein belongs to the SPATA31 family.

Its subcellular location is the membrane. May play a role in spermatogenesis. This is Spermatogenesis-associated protein 31C2 (SPATA31C2) from Homo sapiens (Human).